The chain runs to 321 residues: Torsin-2A (321 aa).

A signal peptide spans 1 to 26; that stretch reads MAVARHGYRPWGSILGLLGLALAAAA. 93–100 is an ATP binding site; that stretch reads GWTGTGKS. Asn149 carries an N-linked (GlcNAc...) asparagine glycan.

This sequence belongs to the ClpA/ClpB family. Torsin subfamily. As to quaternary structure, homohexamer. Interacts with TOR1AIP1. N-glycosylated. Expressed at similar levels in liver, muscle and brain (at protein level).

It is found in the endoplasmic reticulum lumen. The polypeptide is Torsin-2A (Tor2a) (Mus musculus (Mouse)).